The sequence spans 41 residues: uncharacterized protein (41 aa).

It is found in the plastid. The protein localises to the chloroplast. This is an uncharacterized protein from Trieres chinensis (Marine centric diatom).